The primary structure comprises 692 residues: Sulfhydryl oxidase 2 (692 aa).

Positions 1-38 (MAAARAVARDPGAYARQPPSLRAARLPRLLFLLAVVAA) are cleaved as a signal peptide. Residues 54 to 172 (SDAVWLLDSG…RQTMIDFLQN (119 aa)) enclose the Thioredoxin domain. N-linked (GlcNAc...) asparagine glycosylation is present at N71. Catalysis depends on nucleophile residues C85 and C88. 2 cysteine pairs are disulfide-bonded: C85–C88 and C116–C125. 3 N-linked (GlcNAc...) asparagine glycosylation sites follow: N172, N212, and N260. C412 and C424 are oxidised to a cystine. One can recognise an ERV/ALR sulfhydryl oxidase domain in the interval 415 to 524 (SRLELRGYPC…EDPKFPKVPW (110 aa)). FAD-binding positions include R420, W427, H431, E472, H476, 499–506 (WRKHNMVN), K521, and W524. A disulfide bridge connects residues C470 and C473. Cysteines 530 and 533 form a disulfide. Residues 568–607 (DQGSPGEWEAQGREQEEGKGLNPSGKSWRHHDTGSLRPPH) form a disordered region. Over residues 577-586 (AQGREQEEGK) the composition is skewed to basic and acidic residues. The chain crosses the membrane as a helical span at residues 656–676 (SLCVVLYVASSLFLMIMYFFF).

The protein belongs to the quiescin-sulfhydryl oxidase (QSOX) family. FAD serves as cofactor.

Its subcellular location is the membrane. The catalysed reaction is 2 R'C(R)SH + O2 = R'C(R)S-S(R)CR' + H2O2. In terms of biological role, catalyzes the oxidation of sulfhydryl groups in peptide and protein thiols to disulfides with the reduction of oxygen to hydrogen peroxide. May contribute to disulfide bond formation in a variety of secreted proteins. In Mus musculus (Mouse), this protein is Sulfhydryl oxidase 2 (Qsox2).